Reading from the N-terminus, the 622-residue chain is MSTDNKQSLPALTLAAIGVVYGDIGTSPLYTLRECLSGQFGFGVERDAVFGFLSLIFWLLIFTVSIKYITFVMRADNAGEGGILTLMSLAGRNTSARMTSVLVILGLIGGSFFYGEVVITPAISVMSAIEGLEIIAPQLDTWIVPISIIVLTLLFVIQKHGTGMVGKLFAPIMLIWFLLLAVLGARSIYANPEVLQALNPYWAVHFFLQYKTVSFIALGAVVLSITGVEALYADMGHFGKLPIRVAWFSVVLPSLVLNYFGQGALLLKHPEAIKNPFFLLAPEWALIPMLIIATLATVIASQAVISGVFSLTRQAVRLGYLSPMRIIHTSEMESGQIYIPFINWLLYVSVVIVIVSFEHSSNLAAAYGIAVTGTMVLTSILSATVARKNWHWNKLFVGLMLVAFLCIDIPLFSANLDKIVSGGWLPLSLGMVMFTVMTTWKSERFRLLRRMHEHGNSLEAMISSLEKSPPVRVPGTAVYMSRALNVIPFALLHNLKHNKVLHERVILLTLRTEDAPYVHNVRRVQIEQLSPSFWRVVASYGWRETPNVEEVFHRCGLEGLSCRMMETSFFMSHESLIIGKRPWYLRLRGKLYLLLQRNALRAPDQFEIPPNRVIELGTQVEI.

12 helical membrane-spanning segments follow: residues 9-29, 49-69, 101-121, 137-157, 163-183, 213-233, 247-267, 276-296, 337-357, 363-383, 395-415, and 419-439; these read LPAL…TSPL, VFGF…IKYI, VLVI…VITP, PQLD…LFVI, GMVG…LAVL, VSFI…ALYA, WFSV…ALLL, PFFL…ATLA, IYIP…IVSF, LAAA…ILSA, LFVG…FSAN, and IVSG…VMTT.

The protein belongs to the HAK/KUP transporter (TC 2.A.72) family.

It localises to the cell inner membrane. It catalyses the reaction K(+)(in) + H(+)(in) = K(+)(out) + H(+)(out). Responsible for the low-affinity transport of potassium into the cell. Likely operates as a K(+):H(+) symporter. In Klebsiella pneumoniae subsp. pneumoniae (strain ATCC 700721 / MGH 78578), this protein is Low affinity potassium transport system protein Kup.